Here is a 335-residue protein sequence, read N- to C-terminus: Transmembrane protein 120B-A (335 aa).

Residues 1 to 40 (MSLQKCQEEWSEIEKEFQQLQETHKVYKQKLEELNSLQNL) are a coiled coil. 6 helical membrane passes run 100-122 (GLYL…AKFA), 130-150 (FKLY…FVLN), 157-177 (VFNF…SILI), 193-213 (VSTF…YQIF), 268-288 (FLLP…ITLF), and 300-320 (QVFV…LTTL).

This sequence belongs to the TMEM120 family.

It is found in the nucleus inner membrane. In terms of biological role, necessary for efficient adipogenesis. Does not show ion channel activity. The sequence is that of Transmembrane protein 120B-A (tmem120b-a) from Xenopus laevis (African clawed frog).